The sequence spans 285 residues: Probable endonuclease 4 (285 aa).

Zn(2+)-binding residues include His-69, His-109, Glu-145, Asp-179, His-182, His-216, Asp-229, His-231, and Glu-261.

Belongs to the AP endonuclease 2 family. Zn(2+) serves as cofactor.

It carries out the reaction Endonucleolytic cleavage to 5'-phosphooligonucleotide end-products.. Its function is as follows. Endonuclease IV plays a role in DNA repair. It cleaves phosphodiester bonds at apurinic or apyrimidinic (AP) sites, generating a 3'-hydroxyl group and a 5'-terminal sugar phosphate. The protein is Probable endonuclease 4 of Escherichia coli O81 (strain ED1a).